Consider the following 1129-residue polypeptide: ISWI chromatin-remodeling complex ATPase ISW1 (1129 aa).

Residues 144 to 177 form a disordered region; sequence KANGKGKGKHQDVRRRKTEHEEDAELLKEEDSDD. The span at 147–160 shows a compositional bias: basic residues; sequence GKGKGKHQDVRRRK. The span at 164–177 shows a compositional bias: acidic residues; the sequence is EEDAELLKEEDSDD. Residues 208–373 form the Helicase ATP-binding domain; the sequence is VSLHKNKIAG…WALLNFLLPD (166 aa). 221–228 serves as a coordination point for ATP; that stretch reads DEMGLGKT. The DEAH box motif lies at 324–327; that stretch reads DEAH. The 152-residue stretch at 506–657 folds into the Helicase C-terminal domain; that stretch reads VLDKLLKKLK…QLVIQQNRTS (152 aa). The segment at 683 to 705 is disordered; it reads FKSGTSTGSAGTPEPGSGEKGDD. Position 694 is a phosphothreonine (Thr694). A Phosphoserine modification is found at Ser846. SANT domains lie at 882 to 935 and 988 to 1052; these read EGFT…SNIE and NKRT…LLQC. Basic and acidic residues predominate over residues 1073 to 1108; sequence KEDENGKRIREEFADQTANEKENVDGVESKKAKIED. The disordered stretch occupies residues 1073-1129; sequence KEDENGKRIREEFADQTANEKENVDGVESKKAKIEDTSNVGTEQLVAEKIPENETTH.

It belongs to the SNF2/RAD54 helicase family. ISWI subfamily. As to quaternary structure, component of the ISW1A complex, which at least consists of ISW1 and IOC3. Component of the ISW1B complex, which at least consists of ISW1, IOC2 and IOC4.

It localises to the nucleus. Catalytic component of ISW1-type complexes, which act by remodeling the chromatin by catalyzing an ATP-dependent alteration in the structure of nucleosomal DNA. They are involved in coordinating transcriptional repression, activation and elongation phases. The ISW1A complex represses gene expression at initiation through specific positioning of a promoter proximal dinucleosome. The ISW1B complex acts within coding regions to control the amount of RNA polymerase II released into productive elongation and to coordinate elongation with termination and pre-mRNA processing. The protein is ISWI chromatin-remodeling complex ATPase ISW1 (ISW1) of Saccharomyces cerevisiae (strain ATCC 204508 / S288c) (Baker's yeast).